The sequence spans 281 residues: UPF0046 protein C25E10.12 (281 aa).

This sequence belongs to the UPF0046 family.

This Caenorhabditis elegans protein is UPF0046 protein C25E10.12.